Reading from the N-terminus, the 375-residue chain is tRNA-specific 2-thiouridylase MnmA (375 aa).

ATP is bound by residues 12–19 (GMSGGVDS) and Met38. The interval 98 to 100 (NPD) is interaction with target base in tRNA. Cys103 serves as the catalytic Nucleophile. Cys103 and Cys200 form a disulfide bridge. Gly127 is a binding site for ATP. The tract at residues 150-152 (KDQ) is interaction with tRNA. Residue Cys200 is the Cysteine persulfide intermediate of the active site. The segment at 312 to 313 (RY) is interaction with tRNA.

Belongs to the MnmA/TRMU family.

It is found in the cytoplasm. It carries out the reaction S-sulfanyl-L-cysteinyl-[protein] + uridine(34) in tRNA + AH2 + ATP = 2-thiouridine(34) in tRNA + L-cysteinyl-[protein] + A + AMP + diphosphate + H(+). In terms of biological role, catalyzes the 2-thiolation of uridine at the wobble position (U34) of tRNA, leading to the formation of s(2)U34. This is tRNA-specific 2-thiouridylase MnmA from Lactobacillus johnsonii (strain CNCM I-12250 / La1 / NCC 533).